Consider the following 273-residue polypeptide: Citrate lyase subunit beta-like protein (273 aa).

Residues R64 and E112 each coordinate substrate. E112 and D138 together coordinate Mg(2+).

The protein belongs to the HpcH/HpaI aldolase family. Citrate lyase beta subunit-like subfamily. As to quaternary structure, homotrimer. Mg(2+) is required as a cofactor.

May play a role in fatty acid biosynthesis. The polypeptide is Citrate lyase subunit beta-like protein (citE) (Mycobacterium tuberculosis (strain CDC 1551 / Oshkosh)).